The following is a 156-amino-acid chain: Transcription antitermination protein NusB (156 aa).

It belongs to the NusB family.

Its function is as follows. Involved in transcription antitermination. Required for transcription of ribosomal RNA (rRNA) genes. Binds specifically to the boxA antiterminator sequence of the ribosomal RNA (rrn) operons. The sequence is that of Transcription antitermination protein NusB from Clostridium kluyveri (strain ATCC 8527 / DSM 555 / NBRC 12016 / NCIMB 10680 / K1).